Consider the following 156-residue polypeptide: ATP synthase subunit b (156 aa).

Residues 12–32 traverse the membrane as a helical segment; it reads VAFLIFVLFCMKFIWPPVIAA.

The protein belongs to the ATPase B chain family. As to quaternary structure, F-type ATPases have 2 components, F(1) - the catalytic core - and F(0) - the membrane proton channel. F(1) has five subunits: alpha(3), beta(3), gamma(1), delta(1), epsilon(1). F(0) has three main subunits: a(1), b(2) and c(10-14). The alpha and beta chains form an alternating ring which encloses part of the gamma chain. F(1) is attached to F(0) by a central stalk formed by the gamma and epsilon chains, while a peripheral stalk is formed by the delta and b chains.

The protein resides in the cell inner membrane. F(1)F(0) ATP synthase produces ATP from ADP in the presence of a proton or sodium gradient. F-type ATPases consist of two structural domains, F(1) containing the extramembraneous catalytic core and F(0) containing the membrane proton channel, linked together by a central stalk and a peripheral stalk. During catalysis, ATP synthesis in the catalytic domain of F(1) is coupled via a rotary mechanism of the central stalk subunits to proton translocation. In terms of biological role, component of the F(0) channel, it forms part of the peripheral stalk, linking F(1) to F(0). This chain is ATP synthase subunit b, found in Pseudomonas fluorescens (strain ATCC BAA-477 / NRRL B-23932 / Pf-5).